Reading from the N-terminus, the 370-residue chain is 3 beta-hydroxysteroid dehydrogenase/Delta 5--&gt;4-isomerase (370 aa).

The active-site Proton acceptor is the Tyr158. Lys162 is a binding site for NAD(+).

The protein belongs to the 3-beta-HSD family. As to quaternary structure, monomer.

Its subcellular location is the cytoplasm. The enzyme catalyses a 3beta-hydroxy-Delta(5)-steroid + NAD(+) = a 3-oxo-Delta(5)-steroid + NADH + H(+). The catalysed reaction is cholesterol + NAD(+) = cholest-5-en-3-one + NADH + H(+). It carries out the reaction pregnenolone + NAD(+) = pregn-5-ene-3,20-dione + NADH + H(+). It catalyses the reaction 3beta-hydroxyandrost-5-en-17-one + NAD(+) = androst-5-ene-3,17-dione + NADH + H(+). The enzyme catalyses a 3-oxo-Delta(5)-steroid = a 3-oxo-Delta(4)-steroid. The catalysed reaction is cholest-5-en-3-one = cholest-4-en-3-one. It carries out the reaction pregn-5-ene-3,20-dione = progesterone. It catalyses the reaction androst-5-ene-3,17-dione = androst-4-ene-3,17-dione. Its pathway is lipid metabolism; steroid biosynthesis. In terms of biological role, 3-beta-HSD is a bifunctional enzyme, that catalyzes the oxidation and isomerization of cholesterol, pregnenolone, and dehydroepiandrosterone (DHEA) into cholest-4-en-3-one, progesterone, and androsterone, respectively. In Mycobacterium tuberculosis (strain CDC 1551 / Oshkosh), this protein is 3 beta-hydroxysteroid dehydrogenase/Delta 5--&gt;4-isomerase.